The following is a 296-amino-acid chain: Probable xyloglucan endotransglucosylase/hydrolase 1 (296 aa).

An N-terminal signal peptide occupies residues 1-22 (MGIIKGVLFSIVLINLSLVVFC). The GH16 domain maps to 23–221 (GYPRRPVDVP…WANAPFTASY (199 aa)). E107 functions as the Nucleophile in the catalytic mechanism. E111 serves as the catalytic Proton donor. E111 lines the xyloglucan pocket. An N-linked (GlcNAc...) asparagine glycan is attached at N115. Xyloglucan contacts are provided by residues 124 to 126 (QTN), 134 to 136 (NRE), 200 to 201 (DW), and G205. Disulfide bonds link C229–C240 and C277–C290. R282 lines the xyloglucan pocket.

This sequence belongs to the glycosyl hydrolase 16 family. XTH group 1 subfamily. Post-translationally, contains at least one intrachain disulfide bond essential for its enzymatic activity.

The protein localises to the secreted. It localises to the cell wall. Its subcellular location is the extracellular space. The protein resides in the apoplast. The catalysed reaction is breaks a beta-(1-&gt;4) bond in the backbone of a xyloglucan and transfers the xyloglucanyl segment on to O-4 of the non-reducing terminal glucose residue of an acceptor, which can be a xyloglucan or an oligosaccharide of xyloglucan.. Its function is as follows. Catalyzes xyloglucan endohydrolysis (XEH) and/or endotransglycosylation (XET). Cleaves and religates xyloglucan polymers, an essential constituent of the primary cell wall, and thereby participates in cell wall construction of growing tissues. The protein is Probable xyloglucan endotransglucosylase/hydrolase 1 (XTH1) of Solanum lycopersicum (Tomato).